Here is a 252-residue protein sequence, read N- to C-terminus: Triosephosphate isomerase (252 aa).

10–12 (NWK) serves as a coordination point for substrate. Catalysis depends on His-96, which acts as the Electrophile. The active-site Proton acceptor is Glu-168. Substrate-binding positions include Gly-174, Ser-214, and 235–236 (GG).

This sequence belongs to the triosephosphate isomerase family. Homodimer.

Its subcellular location is the cytoplasm. The catalysed reaction is D-glyceraldehyde 3-phosphate = dihydroxyacetone phosphate. It functions in the pathway carbohydrate biosynthesis; gluconeogenesis. The protein operates within carbohydrate degradation; glycolysis; D-glyceraldehyde 3-phosphate from glycerone phosphate: step 1/1. Its function is as follows. Involved in the gluconeogenesis. Catalyzes stereospecifically the conversion of dihydroxyacetone phosphate (DHAP) to D-glyceraldehyde-3-phosphate (G3P). The polypeptide is Triosephosphate isomerase (Streptococcus pyogenes serotype M2 (strain MGAS10270)).